The following is a 428-amino-acid chain: Enolase (428 aa).

Gln163 is a (2R)-2-phosphoglycerate binding site. The active-site Proton donor is the Glu205. Positions 242, 286, and 313 each coordinate Mg(2+). Positions 338, 367, 368, and 389 each coordinate (2R)-2-phosphoglycerate. Lys338 functions as the Proton acceptor in the catalytic mechanism.

It belongs to the enolase family. Mg(2+) is required as a cofactor.

The protein localises to the cytoplasm. The protein resides in the secreted. It localises to the cell surface. The catalysed reaction is (2R)-2-phosphoglycerate = phosphoenolpyruvate + H2O. The protein operates within carbohydrate degradation; glycolysis; pyruvate from D-glyceraldehyde 3-phosphate: step 4/5. Functionally, catalyzes the reversible conversion of 2-phosphoglycerate (2-PG) into phosphoenolpyruvate (PEP). It is essential for the degradation of carbohydrates via glycolysis. This is Enolase from Bordetella bronchiseptica (strain ATCC BAA-588 / NCTC 13252 / RB50) (Alcaligenes bronchisepticus).